Reading from the N-terminus, the 749-residue chain is Semaphorin-3B (749 aa).

A signal peptide spans 1 to 24 (MGRAGAAAVIPGLALLWAVGLGSA). The region spanning 30–513 (RLRLSFQELQ…SRSAVAQIAL (484 aa)) is the Sema domain. Asn82 carries an N-linked (GlcNAc...) asparagine glycan. Cys102 and Cys113 are oxidised to a cystine. Asn124 is a glycosylation site (N-linked (GlcNAc...) asparagine). Cystine bridges form between Cys131–Cys140, Cys269–Cys380, and Cys293–Cys340. N-linked (GlcNAc...) asparagine glycosylation is present at Asn427. Intrachain disulfides connect Cys516–Cys534 and Cys644–Cys710. Residues 573–659 (PALLEHKVFG…GFTQPLRRLS (87 aa)) form the Ig-like C2-type domain. A disordered region spans residues 702–749 (GSANSLRMCRPQPALQSLPLESRRKGRNRRTHAPEPRAERGPRSATHW). The span at 733 to 743 (HAPEPRAERGP) shows a compositional bias: basic and acidic residues.

Belongs to the semaphorin family. As to expression, expressed abundantly but differentially in a variety of neural and nonneural tissues.

It is found in the secreted. The protein localises to the endoplasmic reticulum. In terms of biological role, inhibits axonal extension by providing local signals to specify territories inaccessible for growing axons. The chain is Semaphorin-3B (SEMA3B) from Homo sapiens (Human).